A 226-amino-acid chain; its full sequence is Thiamine-phosphate synthase (226 aa).

Residues 46 to 50 (QLRDK) and N87 each bind 4-amino-2-methyl-5-(diphosphooxymethyl)pyrimidine. 2 residues coordinate Mg(2+): D88 and D107. Residue S126 participates in 4-amino-2-methyl-5-(diphosphooxymethyl)pyrimidine binding. Position 152–154 (152–154 (TPT)) interacts with 2-[(2R,5Z)-2-carboxy-4-methylthiazol-5(2H)-ylidene]ethyl phosphate. K155 contacts 4-amino-2-methyl-5-(diphosphooxymethyl)pyrimidine. G183 contributes to the 2-[(2R,5Z)-2-carboxy-4-methylthiazol-5(2H)-ylidene]ethyl phosphate binding site.

It belongs to the thiamine-phosphate synthase family. The cofactor is Mg(2+).

The catalysed reaction is 2-[(2R,5Z)-2-carboxy-4-methylthiazol-5(2H)-ylidene]ethyl phosphate + 4-amino-2-methyl-5-(diphosphooxymethyl)pyrimidine + 2 H(+) = thiamine phosphate + CO2 + diphosphate. It carries out the reaction 2-(2-carboxy-4-methylthiazol-5-yl)ethyl phosphate + 4-amino-2-methyl-5-(diphosphooxymethyl)pyrimidine + 2 H(+) = thiamine phosphate + CO2 + diphosphate. It catalyses the reaction 4-methyl-5-(2-phosphooxyethyl)-thiazole + 4-amino-2-methyl-5-(diphosphooxymethyl)pyrimidine + H(+) = thiamine phosphate + diphosphate. It functions in the pathway cofactor biosynthesis; thiamine diphosphate biosynthesis; thiamine phosphate from 4-amino-2-methyl-5-diphosphomethylpyrimidine and 4-methyl-5-(2-phosphoethyl)-thiazole: step 1/1. Condenses 4-methyl-5-(beta-hydroxyethyl)thiazole monophosphate (THZ-P) and 2-methyl-4-amino-5-hydroxymethyl pyrimidine pyrophosphate (HMP-PP) to form thiamine monophosphate (TMP). This Mycobacterium sp. (strain JLS) protein is Thiamine-phosphate synthase.